The chain runs to 114 residues: uncharacterized protein (114 aa).

Possibly involved in pGI2 replication mechanism. This is an uncharacterized protein from Bacillus thuringiensis.